The primary structure comprises 673 residues: UvrABC system protein B (673 aa).

Residues 26–414 (EGLEDGLAHQ…GDEVVDQVVR (389 aa)) enclose the Helicase ATP-binding domain. 39–46 (GVTGSGKT) provides a ligand contact to ATP. Positions 92 to 115 (YYDYYQPEAYVPSSDTFIEKDASV) match the Beta-hairpin motif. The Helicase C-terminal domain maps to 431–597 (QVDDLLSEIR…GLNKKVVDIL (167 aa)). Residues 633–668 (QQKIHELEEQMMQHAQNLEFEEAAQIRDQLHQLREL) form the UVR domain.

Belongs to the UvrB family. As to quaternary structure, forms a heterotetramer with UvrA during the search for lesions. Interacts with UvrC in an incision complex.

It localises to the cytoplasm. Functionally, the UvrABC repair system catalyzes the recognition and processing of DNA lesions. A damage recognition complex composed of 2 UvrA and 2 UvrB subunits scans DNA for abnormalities. Upon binding of the UvrA(2)B(2) complex to a putative damaged site, the DNA wraps around one UvrB monomer. DNA wrap is dependent on ATP binding by UvrB and probably causes local melting of the DNA helix, facilitating insertion of UvrB beta-hairpin between the DNA strands. Then UvrB probes one DNA strand for the presence of a lesion. If a lesion is found the UvrA subunits dissociate and the UvrB-DNA preincision complex is formed. This complex is subsequently bound by UvrC and the second UvrB is released. If no lesion is found, the DNA wraps around the other UvrB subunit that will check the other stand for damage. The polypeptide is UvrABC system protein B (Salmonella typhi).